The primary structure comprises 525 residues: GMP synthase [glutamine-hydrolyzing] (525 aa).

The Glutamine amidotransferase type-1 domain maps to 9–202 (SILIIDFGSQ…VHKIVGLKSD (194 aa)). Cysteine 86 serves as the catalytic Nucleophile. Residues histidine 176 and glutamate 178 contribute to the active site. The region spanning 203-400 (WTMAAYRAEM…LGLPESFIGR (198 aa)) is the GMPS ATP-PPase domain. ATP is bound at residue 230 to 236 (SGGVDSS).

As to quaternary structure, homodimer.

The enzyme catalyses XMP + L-glutamine + ATP + H2O = GMP + L-glutamate + AMP + diphosphate + 2 H(+). The protein operates within purine metabolism; GMP biosynthesis; GMP from XMP (L-Gln route): step 1/1. Functionally, catalyzes the synthesis of GMP from XMP. This is GMP synthase [glutamine-hydrolyzing] from Agrobacterium fabrum (strain C58 / ATCC 33970) (Agrobacterium tumefaciens (strain C58)).